The following is a 250-amino-acid chain: NADH-quinone oxidoreductase subunit C (250 aa).

It belongs to the complex I 30 kDa subunit family. As to quaternary structure, NDH-1 is composed of 14 different subunits. Subunits NuoB, C, D, E, F, and G constitute the peripheral sector of the complex.

The protein resides in the cell inner membrane. The catalysed reaction is a quinone + NADH + 5 H(+)(in) = a quinol + NAD(+) + 4 H(+)(out). In terms of biological role, NDH-1 shuttles electrons from NADH, via FMN and iron-sulfur (Fe-S) centers, to quinones in the respiratory chain. The immediate electron acceptor for the enzyme in this species is believed to be ubiquinone. Couples the redox reaction to proton translocation (for every two electrons transferred, four hydrogen ions are translocated across the cytoplasmic membrane), and thus conserves the redox energy in a proton gradient. The chain is NADH-quinone oxidoreductase subunit C from Xanthomonas oryzae pv. oryzae (strain PXO99A).